The following is an 855-amino-acid chain: Pre-mRNA-splicing factor SYF1 (855 aa).

HAT repeat units follow at residues 15–47 (LVFE…FKQG), 48–80 (APKP…ARRA), 90–122 (PAYE…FLMD), 124–158 (GRVT…FLRS), 160–192 (PLPE…SSDR), 198–230 (QRLA…LISQ), 235–268 (VQSL…YYIR), 270–305 (GHFE…FEES), and 369–407 (GRPR…FYED). Lys420 carries the post-translational modification N6-acetyllysine. HAT repeat units follow at residues 498-530 (GTFQ…FLEE), 532-566 (KYFE…KFIS), 571-605 (RKLE…LEEE), 643-677 (YGVT…MECK), and 679-713 (GEID…FEVR). The disordered stretch occupies residues 808–855 (AELAQQANPEEIQLGEDEDEDEMDLEPNEVRLEQQSVPAAVFGSLKED). The span at 820-834 (QLGEDEDEDEMDLEP) shows a compositional bias: acidic residues. A Phosphoserine modification is found at Ser851.

This sequence belongs to the crooked-neck family. Associates with RNA polymerase II, the TCR-specific proteins CKN1/CSA and ERCC6/CSB, and XPA. Identified in the spliceosome C complex. Component of the XAB2 complex, a multimeric protein complex composed of XAB2, PRPF19, AQR, ZNF830, ISY1, and PPIE. Identified in a pentameric intron-binding (IB) complex composed of AQR, XAB2, ISY1, ZNF830 and PPIE that is incorporated into the spliceosome as a preassembled complex. The IB complex does not contain PRPF19.

Its subcellular location is the nucleus. Its function is as follows. Involved in pre-mRNA splicing as component of the spliceosome. Involved in transcription-coupled repair (TCR), transcription and pre-mRNA splicing. This is Pre-mRNA-splicing factor SYF1 (Xab2) from Rattus norvegicus (Rat).